The primary structure comprises 325 residues: Diacylglycerol acyltransferase/mycolyltransferase Ag85B (325 aa).

The signal sequence occupies residues 1–40 (MTDVSGKIRAWGRRLLVGAAAAAALPGLVGLAGGAATAGA). 82 to 83 (LR) is a substrate binding site. Residues 98–108 (FEWYYQSGLSV) form a fibronectin-binding region. C127 and C132 are disulfide-bonded. Residues S166 and D194 each coordinate substrate. S166 functions as the Nucleophile in the catalytic mechanism. E270 is an active-site residue. Substrate contacts are provided by residues 272-275 (FVRS), K279, and 302-304 (HSW). H302 is an active-site residue.

It belongs to the mycobacterial A85 antigen family.

It localises to the secreted. The enzyme catalyses 2 alpha,alpha'-trehalose 6-mycolate = alpha,alpha'-trehalose 6,6'-bismycolate + alpha,alpha-trehalose. It carries out the reaction an acyl-CoA + a 1,2-diacyl-sn-glycerol = a triacyl-sn-glycerol + CoA. Its function is as follows. The antigen 85 proteins (FbpA, FbpB, FbpC) are responsible for the high affinity of mycobacteria for fibronectin, a large adhesive glycoprotein, which facilitates the attachment of M.tuberculosis to murine alveolar macrophages (AMs). They also help to maintain the integrity of the cell wall by catalyzing the transfer of mycolic acids to cell wall arabinogalactan and through the synthesis of alpha,alpha-trehalose dimycolate (TDM, cord factor). They catalyze the transfer of a mycoloyl residue from one molecule of alpha,alpha-trehalose monomycolate (TMM) to another TMM, leading to the formation of TDM. The protein is Diacylglycerol acyltransferase/mycolyltransferase Ag85B (fbpB) of Mycobacterium kansasii.